Reading from the N-terminus, the 118-residue chain is Large ribosomal subunit protein bL19 (118 aa).

It belongs to the bacterial ribosomal protein bL19 family.

Functionally, this protein is located at the 30S-50S ribosomal subunit interface and may play a role in the structure and function of the aminoacyl-tRNA binding site. The polypeptide is Large ribosomal subunit protein bL19 (Campylobacter hominis (strain ATCC BAA-381 / DSM 21671 / CCUG 45161 / LMG 19568 / NCTC 13146 / CH001A)).